A 669-amino-acid polypeptide reads, in one-letter code: DNA ligase (669 aa).

35–39 (DFEYD) contributes to the NAD(+) binding site. The segment at 52–71 (YPEWDSPDSPTHRVGSDKTE) is disordered. Residues 61 to 71 (PTHRVGSDKTE) show a composition bias toward basic and acidic residues. Residues 84-85 (SL) and E115 contribute to the NAD(+) site. K117 (N6-AMP-lysine intermediate) is an active-site residue. NAD(+)-binding residues include R138, E175, K290, and K314. Zn(2+) is bound by residues C408, C411, C426, and C432. The 80-residue stretch at 590 to 669 (PVSARLAGKT…EEEFLRLIEE (80 aa)) folds into the BRCT domain.

It belongs to the NAD-dependent DNA ligase family. LigA subfamily. It depends on Mg(2+) as a cofactor. Mn(2+) serves as cofactor.

The catalysed reaction is NAD(+) + (deoxyribonucleotide)n-3'-hydroxyl + 5'-phospho-(deoxyribonucleotide)m = (deoxyribonucleotide)n+m + AMP + beta-nicotinamide D-nucleotide.. Functionally, DNA ligase that catalyzes the formation of phosphodiester linkages between 5'-phosphoryl and 3'-hydroxyl groups in double-stranded DNA using NAD as a coenzyme and as the energy source for the reaction. It is essential for DNA replication and repair of damaged DNA. This Porphyromonas gingivalis (strain ATCC 33277 / DSM 20709 / CIP 103683 / JCM 12257 / NCTC 11834 / 2561) protein is DNA ligase.